A 661-amino-acid chain; its full sequence is MQSSVYFDQTGSFASSSDNVVSSTTNTHNISPSHRSSLNLNTTSHPHEASGRGSASGELYLNDTNSPLAISSMLNTLALGSMPQDIASSNISNHDNNIKGSYSLKLSNVAKDITLRECYAIFALAEGVKSIELQKKNSSSSITSASLEDENDIFIIARFELLNLAINYAVILNSKNELFGPSFPNKTTVEIIDDTTKNLVSFPSSAIFNDTSRLNKSNSGMKRPSLLSQRSRFSFSDPFSNDSPLSQQQSQQQQQQPQQPQQHSTQKHSPQQCNQQQVNSSIPLSSQGQVIGLHSNHSHQDLSVESTIQTSDIGKSFLLRDNTEINEKIWGTSGIPSSINGYMSTPQPSTPTLEWGNTSASQHGSSFFLPSAASTAIAPTNSNTSANANASSNNGASNNGANQALSASSQQPMMQIGNTINTSLTSSNSLPPYGLMSSQSQHISNMVNTSDMNITPQKQNRFMQQPQPEHMYPVNQSNTPQKVPPARLSSSRNSHKNNSTTSLSSNITGSASISQADLSLLARIPPPANPADQNPPCNTLYVGNLPSDATEQELRQLFSGQEGFRRLSFRNKNTTSNGHSHGPMCFVEFDDVSFATRALAELYGRQLPRSTVSSKGGIRLSFSKNPLGVRGPNSRRGGSGNPNPNVNMLSSYNSNVGHIKN.

Low complexity predominate over residues 14-31; that stretch reads ASSSDNVVSSTTNTHNIS. The tract at residues 14 to 58 is disordered; it reads ASSSDNVVSSTTNTHNISPSHRSSLNLNTTSHPHEASGRGSASGE. Residues 32–44 are compositionally biased toward polar residues; it reads PSHRSSLNLNTTS. Position 231 is a phosphoserine (Ser231). Low complexity-rich tracts occupy residues 237 to 272, 383 to 409, and 496 to 508; these read DPFS…SPQQ, NTSA…SASS, and KNNS…SNIT. Disordered regions lie at residues 237 to 280, 383 to 410, 469 to 508, and 613 to 661; these read DPFS…QVNS, NTSA…ASSQ, EHMY…SNIT, and SSKG…HIKN. The RRM domain maps to 538-625; sequence NTLYVGNLPS…GGIRLSFSKN (88 aa). A compositionally biased stretch (low complexity) spans 628–647; sequence GVRGPNSRRGGSGNPNPNVN. Positions 648–661 are enriched in polar residues; that stretch reads MLSSYNSNVGHIKN.

Its function is as follows. Involved in size control and cell cycle. This chain is Protein WHI3 (WHI3), found in Saccharomyces cerevisiae (strain ATCC 204508 / S288c) (Baker's yeast).